The chain runs to 232 residues: ATP-dependent Clp protease proteolytic subunit 2 (232 aa).

Ser124 acts as the Nucleophile in catalysis. The active site involves His149.

Belongs to the peptidase S14 family. Fourteen ClpP subunits assemble into 2 heptameric rings which stack back to back to give a disk-like structure with a central cavity, resembling the structure of eukaryotic proteasomes.

The protein localises to the cytoplasm. The enzyme catalyses Hydrolysis of proteins to small peptides in the presence of ATP and magnesium. alpha-casein is the usual test substrate. In the absence of ATP, only oligopeptides shorter than five residues are hydrolyzed (such as succinyl-Leu-Tyr-|-NHMec, and Leu-Tyr-Leu-|-Tyr-Trp, in which cleavage of the -Tyr-|-Leu- and -Tyr-|-Trp bonds also occurs).. Cleaves peptides in various proteins in a process that requires ATP hydrolysis. Has a chymotrypsin-like activity. Plays a major role in the degradation of misfolded proteins. The sequence is that of ATP-dependent Clp protease proteolytic subunit 2 from Nostoc sp. (strain PCC 7120 / SAG 25.82 / UTEX 2576).